We begin with the raw amino-acid sequence, 395 residues long: LIM/homeobox protein Lhx3 (395 aa).

LIM zinc-binding domains are found at residues 28–78 (CAGC…CKDD) and 87–141 (CAAC…CKAD). The homeobox DNA-binding region spans 154-213 (AKRPRTTITAKQLETLKNAYNNSPKPARHVREQLSSETGLDMRVVQVWFQNRRAKEKRLK). Disordered stretches follow at residues 208–304 (KEKR…QDQY) and 363–383 (GPSSDLSTGSSGGYPDFPVSP). Over residues 257 to 278 (DEPSMSEMNHSNGIYNSLNDSS) the composition is skewed to polar residues.

In terms of assembly, interacts with ldb1 and with the N-terminus of rnf12. In terms of tissue distribution, in dorsal regions at neural tube and tailbud stages and in adults predominantly in the pituitary gland and weakly in the eye and brain.

The protein resides in the nucleus. Its function is as follows. Transcription factor. May be involved in the specification and maintenance of differentiation of distinct neuronal and neuroendocrine tissues. Early marker for the pituitary and pineal lineages, it may be involved in specifying these lineages. The chain is LIM/homeobox protein Lhx3 (lhx3) from Xenopus laevis (African clawed frog).